We begin with the raw amino-acid sequence, 339 residues long: Ornithine carbamoyltransferase, catabolic (339 aa).

Carbamoyl phosphate contacts are provided by residues 57–60 (STRT), Gln84, Arg108, and 135–138 (HPTQ). L-ornithine is bound by residues Asn167, Asp231, and 235 to 236 (SM). Residues 274–275 (CL) and Arg319 contribute to the carbamoyl phosphate site.

It belongs to the aspartate/ornithine carbamoyltransferase superfamily. OTCase family.

It is found in the cytoplasm. It carries out the reaction carbamoyl phosphate + L-ornithine = L-citrulline + phosphate + H(+). It functions in the pathway amino-acid degradation; L-arginine degradation via ADI pathway; carbamoyl phosphate from L-arginine: step 2/2. Its function is as follows. Reversibly catalyzes the transfer of the carbamoyl group from carbamoyl phosphate (CP) to the N(epsilon) atom of ornithine (ORN) to produce L-citrulline. The polypeptide is Ornithine carbamoyltransferase, catabolic (arcB) (Enterococcus faecalis (strain ATCC 700802 / V583)).